Consider the following 489-residue polypeptide: Rhamnulokinase (489 aa).

13 to 17 (ASSGR) contributes to the ATP binding site. Cys68 and Cys222 are joined by a disulfide. Substrate-binding positions include Gly83 and 236–238 (HDT). Asp237 (proton acceptor) is an active-site residue. Thr259 contributes to the ATP binding site. Residue Asn296 coordinates substrate. Gln304 contributes to the ATP binding site. A disulfide bridge links Cys353 with Cys370. Residue Gly402 coordinates ATP. The cysteines at positions 413 and 417 are disulfide-linked.

The protein belongs to the rhamnulokinase family. Monomer. Mg(2+) serves as cofactor.

The enzyme catalyses L-rhamnulose + ATP = L-rhamnulose 1-phosphate + ADP + H(+). It participates in carbohydrate degradation; L-rhamnose degradation; glycerone phosphate from L-rhamnose: step 2/3. In terms of biological role, involved in the catabolism of L-rhamnose (6-deoxy-L-mannose). Catalyzes the transfer of the gamma-phosphate group from ATP to the 1-hydroxyl group of L-rhamnulose to yield L-rhamnulose 1-phosphate. This is Rhamnulokinase from Escherichia fergusonii (strain ATCC 35469 / DSM 13698 / CCUG 18766 / IAM 14443 / JCM 21226 / LMG 7866 / NBRC 102419 / NCTC 12128 / CDC 0568-73).